A 344-amino-acid chain; its full sequence is N-acetyl-gamma-glutamyl-phosphate reductase (344 aa).

Cysteine 148 is a catalytic residue.

Belongs to the NAGSA dehydrogenase family. Type 1 subfamily.

It localises to the cytoplasm. It carries out the reaction N-acetyl-L-glutamate 5-semialdehyde + phosphate + NADP(+) = N-acetyl-L-glutamyl 5-phosphate + NADPH + H(+). It participates in amino-acid biosynthesis; L-arginine biosynthesis; N(2)-acetyl-L-ornithine from L-glutamate: step 3/4. Its function is as follows. Catalyzes the NADPH-dependent reduction of N-acetyl-5-glutamyl phosphate to yield N-acetyl-L-glutamate 5-semialdehyde. This chain is N-acetyl-gamma-glutamyl-phosphate reductase, found in Clostridium botulinum (strain Alaska E43 / Type E3).